The following is a 321-amino-acid chain: Protein stand still (321 aa).

2 coiled-coil regions span residues Lys74–Ala103 and Lys147–Leu167. Positions His146–Ser162 are enriched in basic and acidic residues. Disordered stretches follow at residues His146–Asn166 and Gln227–Val248. A compositionally biased stretch (low complexity) spans Ser235–Ser244. The stretch at Gln272 to Cys292 forms a coiled coil.

As to expression, germ cells specific. Expressed in all germ cells. During the first instar larvae, it is expressed in all germ cells of both sexes. In third instar larvae, it decreases in male germ cells while it remains in female germ cells. In adult ovary, it is expressed in cells of the germarium, including the stem cells. In the early previtellogenic stages, it is highly expressed in the nurse cells. During vitellogenesis, it is not translocated into the maturing egg. In testes, it is only expressed during some steps of male germline differentiation. At the apex testis, it is expressed at low level in stem cells and dividing spermatogonia, while in newly formed 16-cell cysts of primary spermatocytes, it is transiently but strongly expressed before vanishing during spermatocyte growth phase.

The protein resides in the nucleus. Functionally, essential in the female germline for proper survival, sex determination and differentiation. Participates in the transcriptional activation of Otu. Does not regulate the expression of Ovo. This chain is Protein stand still (stil), found in Drosophila melanogaster (Fruit fly).